A 608-amino-acid chain; its full sequence is Alpha-glycerophosphate oxidase (608 aa).

21 to 49 (DLLIIGGGITGAGVALQAAASGLETGLIE) provides a ligand contact to FAD. The interval 393-418 (SAVSKLESSTSEKHLDPSAVSRGSSL) is disordered.

The protein belongs to the FAD-dependent glycerol-3-phosphate dehydrogenase family. FAD is required as a cofactor.

The protein localises to the cell membrane. The catalysed reaction is sn-glycerol 3-phosphate + O2 = dihydroxyacetone phosphate + H2O2. Its pathway is membrane lipid metabolism; glycerophospholipid metabolism. In Streptococcus pneumoniae serotype 4 (strain ATCC BAA-334 / TIGR4), this protein is Alpha-glycerophosphate oxidase (glpO).